Consider the following 115-residue polypeptide: Protein Wnt-2 (115 aa).

Residue Ser-1 is the site of O-palmitoleoyl serine; by PORCN attachment. A disulfide bond links Cys-81 and Cys-96. Asn-82 is a glycosylation site (N-linked (GlcNAc...) asparagine).

It belongs to the Wnt family. In terms of processing, palmitoleoylation is required for efficient binding to frizzled receptors. Depalmitoleoylation leads to Wnt signaling pathway inhibition.

Its subcellular location is the secreted. The protein resides in the extracellular space. It is found in the extracellular matrix. In terms of biological role, ligand for members of the frizzled family of seven transmembrane receptors. Probable developmental protein. May be a signaling molecule which affects the development of discrete regions of tissues. Is likely to signal over only few cell diameters. The sequence is that of Protein Wnt-2 (WNT-2) from Strongylocentrotus purpuratus (Purple sea urchin).